The following is a 483-amino-acid chain: Betaine aldehyde dehydrogenase (483 aa).

Residues Ile27 and Asp93 each coordinate K(+). Gly149–Trp151 provides a ligand contact to NAD(+). The active-site Charge relay system is the Lys161. Residue Lys175–Glu178 coordinates NAD(+). Val179 contacts K(+). Residue Ser228–Thr231 participates in NAD(+) binding. Residue Val243 participates in K(+) binding. The Proton acceptor role is filled by Glu249. NAD(+) is bound by residues Gly251, Cys283, and Glu380. Cys283 functions as the Nucleophile in the catalytic mechanism. Residue Cys283 is modified to Cysteine sulfenic acid (-SOH). K(+) contacts are provided by Lys450 and Gly453. Glu457 functions as the Charge relay system in the catalytic mechanism.

This sequence belongs to the aldehyde dehydrogenase family. As to quaternary structure, dimer of dimers. It depends on K(+) as a cofactor.

The enzyme catalyses betaine aldehyde + NAD(+) + H2O = glycine betaine + NADH + 2 H(+). The protein operates within amine and polyamine biosynthesis; betaine biosynthesis via choline pathway; betaine from betaine aldehyde: step 1/1. Its function is as follows. Involved in the biosynthesis of the osmoprotectant glycine betaine. Catalyzes the irreversible oxidation of betaine aldehyde to the corresponding acid. In Cereibacter sphaeroides (strain ATCC 17025 / ATH 2.4.3) (Rhodobacter sphaeroides), this protein is Betaine aldehyde dehydrogenase.